Consider the following 64-residue polypeptide: Large ribosomal subunit protein uL30 (64 aa).

It belongs to the universal ribosomal protein uL30 family. As to quaternary structure, part of the 50S ribosomal subunit.

The sequence is that of Large ribosomal subunit protein uL30 from Rhodopseudomonas palustris (strain BisA53).